The chain runs to 225 residues: Cell wall mannoprotein CIS3 (225 aa).

Residues 1–21 form the signal peptide; the sequence is MQFKNVALAASVAALSATASA. A propeptide spanning residues 22 to 64 is cleaved from the precursor; that stretch reads EGYTPGEPWSTLTPTGSISCGAAEYTTTFGIAVQAITSSKAKR. One copy of the PIR1/2/3 repeat lies at 65 to 82; the sequence is DVISQIGDGQVQATSAAA. S68 carries O-linked (Man) serine glycosylation. T78 is a glycosylation site (O-linked (Man) threonine). Polar residues predominate over residues 78 to 92; that stretch reads TSAAATDSQVQASST. The segment at 78–128 is disordered; that stretch reads TSAAATDSQVQASSTATPTSSEKISSSASKTSSTNATSSSCATPSLKDSSC. Residues 93 to 122 show a composition bias toward low complexity; it reads ATPTSSEKISSSASKTSSTNATSSSCATPS. S102, S103, S104, and S106 each carry an O-linked (Man) serine glycan. A glycan (O-linked (Man) threonine) is linked at T108. S109 carries O-linked (Man) serine glycosylation. Residues T111 and T114 are each glycosylated (O-linked (Man) threonine). 2 O-linked (Man) serine glycosylation sites follow: S115 and S116.

This sequence belongs to the PIR protein family. Post-translationally, covalently linked to beta-1,3-glucan of the inner cell wall layer via an alkali-sensitive ester linkage between the gamma-carboxyl group of glutamic acid, arising from Gln-74 within the PIR1/2/3 repeat, and hydroxyl groups of glucoses of beta-1,3-glucan chains. In terms of processing, extensively O-mannosylated.

Its subcellular location is the secreted. The protein resides in the cell wall. In terms of biological role, component of the outer cell wall layer. Required for stability of the cell wall and for optimal growth. Required for resistance against several antifungal and cell wall-perturbing agents. In Saccharomyces cerevisiae (strain AWRI1631) (Baker's yeast), this protein is Cell wall mannoprotein CIS3 (CIS3).